The chain runs to 588 residues: NADP-dependent malic enzyme 3 (588 aa).

Glycine 2 carries the post-translational modification N-acetylglycine. Tyrosine 136 acts as the Proton donor in catalysis. Arginine 189 is an NADP(+) binding site. Lysine 207 serves as the catalytic Proton acceptor. A divalent metal cation contacts are provided by glutamate 279, aspartate 280, and aspartate 303. NADP(+) is bound by residues aspartate 303, 332-348 (LFLG…ELIA), and asparagine 444.

Belongs to the malic enzymes family. As to quaternary structure, homohexamers and homooctamers. Requires Mg(2+) as cofactor. Mn(2+) serves as cofactor. Mostly expressed in flowers, and, to a lower extent, in stems. In leaves and stems, restricted to the trichomes and trichome basal cells. Also present in the stipules flanking the base of the inflorescence bract leaves and in the meristematic zone of developing lateral roots. In flowers, present in pollen and the abscission zone of developing siliques.

The protein resides in the cytoplasm. It catalyses the reaction (S)-malate + NADP(+) = pyruvate + CO2 + NADPH. The catalysed reaction is oxaloacetate + H(+) = pyruvate + CO2. Its activity is regulated as follows. Slightly activated by succinate and aspartate. Repressed by fumarate, malate, oxaloacetate and glucose. The protein is NADP-dependent malic enzyme 3 (NADP-ME3) of Arabidopsis thaliana (Mouse-ear cress).